The primary structure comprises 491 residues: Cell division control protein 1 (491 aa).

Residues 1-33 (MVYRNRSKSVLSTHSKKSDDKAHYKSRSKKKSK) form a disordered region. At 1–39 (MVYRNRSKSVLSTHSKKSDDKAHYKSRSKKKSKSRSKKR) the chain is on the cytoplasmic side. Basic residues predominate over residues 24–33 (YKSRSKKKSK). Residues 40-60 (LRIYWRYISIVWILWLGLISY) traverse the membrane as a helical segment. Residues 61–391 (YESVVVKRAM…LCYMPDPYKA (331 aa)) lie on the Extracellular side of the membrane. A divalent metal cation is bound by residues D95, D144, N183, and H323. The helical transmembrane segment at 392-412 (IRMYLWGLLFSAAFIAYMHFF) threads the bilayer. Over 413–465 (PKSFNNRVATIMNRVFTRPDGNTSDLPLPTSISKSKSKKSLTHSKYAVNDTRS) the chain is Cytoplasmic. The helical transmembrane segment at 466 to 486 (IKQFLVNAIVLFVSVMPIFIY) threads the bilayer. Residues 487–491 (FYTVV) are Extracellular-facing.

The protein belongs to the metallophosphoesterase superfamily. MPPE1 family. A divalent metal cation serves as cofactor.

The protein resides in the membrane. Its function is as follows. Probable metallophosphoesterase which may participate in recombinational repair of double -strand breaks. The protein is Cell division control protein 1 (CDC1) of Saccharomyces cerevisiae (strain ATCC 204508 / S288c) (Baker's yeast).